The following is a 79-amino-acid chain: UPF0349 protein GTNG_2908 (79 aa).

The protein belongs to the UPF0349 family.

This is UPF0349 protein GTNG_2908 from Geobacillus thermodenitrificans (strain NG80-2).